The following is a 488-amino-acid chain: Proline--tRNA ligase (488 aa).

It belongs to the class-II aminoacyl-tRNA synthetase family. ProS type 3 subfamily. As to quaternary structure, homodimer.

It localises to the cytoplasm. The catalysed reaction is tRNA(Pro) + L-proline + ATP = L-prolyl-tRNA(Pro) + AMP + diphosphate. Catalyzes the attachment of proline to tRNA(Pro) in a two-step reaction: proline is first activated by ATP to form Pro-AMP and then transferred to the acceptor end of tRNA(Pro). The protein is Proline--tRNA ligase of Borrelia garinii subsp. bavariensis (strain ATCC BAA-2496 / DSM 23469 / PBi) (Borreliella bavariensis).